We begin with the raw amino-acid sequence, 579 residues long: Rho guanine nucleotide exchange factor 25 (579 aa).

2 disordered regions span residues alanine 27 to glutamate 61 and valine 172 to lysine 194. A DH domain is found at arginine 199–methionine 375. The segment at leucine 317 to glutamine 338 is important for binding to Rho GTPases. Residues arginine 380–serine 499 enclose the PH domain. Residues serine 472–arginine 498 form a sufficient to bind activated GNAQ region. 2 disordered regions span residues glutamine 487–histidine 516 and leucine 546–leucine 579.

In terms of assembly, interacts with activated GNAQ and GNA11. Interacts with RHOA, CDC42 and RAC1. Interacts (via the DH domain) with POPDC1 (via the C-terminus cytoplasmic tail).

It is found in the cytoplasm. It localises to the myofibril. The protein localises to the sarcomere. The protein resides in the cell membrane. Its function is as follows. May play a role in actin cytoskeleton reorganization in different tissues since its activation induces formation of actin stress fibers. It works as a guanine nucleotide exchange factor for Rho family of small GTPases. Links specifically G alpha q/11-coupled receptors to RHOA activation. May be an important regulator of processes involved in axon and dendrite formation. In neurons seems to be an exchange factor primarily for RAC1. Involved in skeletal myogenesis. The sequence is that of Rho guanine nucleotide exchange factor 25 (Arhgef25) from Rattus norvegicus (Rat).